Reading from the N-terminus, the 473-residue chain is ATP synthase subunit beta (473 aa).

Residue 158–165 coordinates ATP; sequence GGAGVGKT.

It belongs to the ATPase alpha/beta chains family. F-type ATPases have 2 components, CF(1) - the catalytic core - and CF(0) - the membrane proton channel. CF(1) has five subunits: alpha(3), beta(3), gamma(1), delta(1), epsilon(1). CF(0) has three main subunits: a(1), b(2) and c(9-12). The alpha and beta chains form an alternating ring which encloses part of the gamma chain. CF(1) is attached to CF(0) by a central stalk formed by the gamma and epsilon chains, while a peripheral stalk is formed by the delta and b chains.

Its subcellular location is the cell membrane. It carries out the reaction ATP + H2O + 4 H(+)(in) = ADP + phosphate + 5 H(+)(out). Produces ATP from ADP in the presence of a proton gradient across the membrane. The catalytic sites are hosted primarily by the beta subunits. The protein is ATP synthase subunit beta of Bacillus caldotenax.